Reading from the N-terminus, the 358-residue chain is Prostaglandin E2 receptor EP2 subtype (358 aa).

The Extracellular portion of the chain corresponds to 1 to 23; it reads MGNASNDSQSEDCETRQWLPPGE. N-linked (GlcNAc...) asparagine glycans are attached at residues Asn3 and Asn6. The chain crosses the membrane as a helical span at residues 24–47; the sequence is SPAISSVMFSAGVLGNLIALALLA. Over 48-65 the chain is Cytoplasmic; that stretch reads RRWRGDVGCSAGRRSSLS. A helical membrane pass occupies residues 66-91; it reads LFHVLVTELVFTDLLGTCLISPVVLA. At 92-111 the chain is on the extracellular side; the sequence is SYARNQTLVALAPESRACTY. Residue Asn96 is glycosylated (N-linked (GlcNAc...) asparagine). The cysteines at positions 109 and 187 are disulfide-linked. A helical membrane pass occupies residues 112 to 132; that stretch reads FAFAMTFFSLATMLMLFAMAL. The Cytoplasmic segment spans residues 133–151; that stretch reads ERYLSIGHPYFYQRRVSRS. A helical transmembrane segment spans residues 152 to 176; it reads GGLAVLPVIYAVSLLFCSLPLLDYG. Over 177–198 the chain is Extracellular; that stretch reads QYVQYCPGTWCFIRHGRTAYLQ. Residues 199-223 traverse the membrane as a helical segment; that stretch reads LYATLLLLLIVSVLACNFSVILNLI. Topologically, residues 224-262 are cytoplasmic; the sequence is RMHRRSRRSRCGPSLGSGRGGPGARRRGERVSMAEETDH. The disordered stretch occupies residues 231–253; the sequence is RSRCGPSLGSGRGGPGARRRGER. A helical transmembrane segment spans residues 263-286; sequence LILLAIMTITFAVCSLPFTIFAYM. N-linked (GlcNAc...) asparagine glycosylation is present at Asn287. Over 287-299 the chain is Extracellular; that stretch reads NETSSRKEKWDLQ. Residues 300-323 traverse the membrane as a helical segment; sequence ALRFLSINSIIDPWVFAILRPPVL. Topologically, residues 324–358 are cytoplasmic; that stretch reads RLMRSVLCCRISLRTQDATQTSCSTQSDASKQADL.

Belongs to the G-protein coupled receptor 1 family. Placenta and lung.

It localises to the cell membrane. Functionally, receptor for prostaglandin E2 (PGE2). The activity of this receptor is mediated by G(s) proteins that stimulate adenylate cyclase. The subsequent raise in intracellular cAMP is responsible for the relaxing effect of this receptor on smooth muscle. The chain is Prostaglandin E2 receptor EP2 subtype (PTGER2) from Homo sapiens (Human).